The primary structure comprises 302 residues: Sulfate adenylyltransferase subunit 2 (302 aa).

Residues R280–F302 are disordered.

Belongs to the PAPS reductase family. CysD subfamily. As to quaternary structure, heterodimer composed of CysD, the smaller subunit, and CysN.

It catalyses the reaction sulfate + ATP + H(+) = adenosine 5'-phosphosulfate + diphosphate. The protein operates within sulfur metabolism; hydrogen sulfide biosynthesis; sulfite from sulfate: step 1/3. In terms of biological role, with CysN forms the ATP sulfurylase (ATPS) that catalyzes the adenylation of sulfate producing adenosine 5'-phosphosulfate (APS) and diphosphate, the first enzymatic step in sulfur assimilation pathway. APS synthesis involves the formation of a high-energy phosphoric-sulfuric acid anhydride bond driven by GTP hydrolysis by CysN coupled to ATP hydrolysis by CysD. This chain is Sulfate adenylyltransferase subunit 2, found in Vibrio parahaemolyticus serotype O3:K6 (strain RIMD 2210633).